Reading from the N-terminus, the 149-residue chain is Gamma-glutamylaminecyclotransferase (149 aa).

7 to 10 (YGTL) provides a ligand contact to substrate. Glutamate 82 serves as the catalytic Proton acceptor.

The protein belongs to the gamma-glutamylcyclotransferase family. Monomer.

It catalyses the reaction epsilon-(gamma-L-glutamyl)-L-lysine = 5-oxo-L-proline + L-lysine. Its function is as follows. Contributes to degradation of proteins cross-linked by transglutaminases by degrading the cross-link between a lysine and a glutamic acid residue. Catalyzes the formation of 5-oxo-L-proline from L-gamma-glutamyl-L-epsilon-lysine. Inactive with L-gamma-glutamyl-alpha-amino acid substrates such as L-gamma-glutamyl-L-alpha-cysteine and L-gamma-glutamyl-L-alpha-alanine. This chain is Gamma-glutamylaminecyclotransferase (Ggact), found in Mus musculus (Mouse).